Reading from the N-terminus, the 114-residue chain is UPF0473 protein OEOE_1164 (114 aa).

The protein belongs to the UPF0473 family.

The protein is UPF0473 protein OEOE_1164 of Oenococcus oeni (strain ATCC BAA-331 / PSU-1).